A 96-amino-acid polypeptide reads, in one-letter code: DNA-Binding protein G5P (96 aa).

Belongs to the inovirus G5P protein family. Homodimer.

In terms of biological role, binds to DNA in a highly cooperative manner without pronounced sequence specificity. During synthesis of the single-stranded (progeny) viral DNA, prevents the conversion into the double-stranded replicative form. G5P is displaced by the capsid protein G8P during phage assembly on the inner bacterial membrane. This is DNA-Binding protein G5P (V) from Escherichia coli (Bacteriophage If1).